A 141-amino-acid polypeptide reads, in one-letter code: N,N-dimethylformamidase alpha subunit (141 aa).

Heterotetramer of two DmfA1 (alpha) and two DmfA2 (beta) subunits.

It catalyses the reaction N,N-dimethylformamide + H2O = dimethylamine + formate. Hydrolyzes N,N-dimethylformamide, and to a lesser extent N,N-dimethylacetamide and N,N-diethylacetamide. Has no activity against the substituted amides N-methylformamide, N-ethylformamide, N-ethylformamide and N-methylacetamide or the unsubstituted amides formamide, nicotinamide, acetoamide, benzamide, acetamide and acrylamide. This chain is N,N-dimethylformamidase alpha subunit, found in Paracoccus aminophilus.